Reading from the N-terminus, the 575-residue chain is Amyloid-beta A4 precursor protein-binding family A member 3 (575 aa).

An N-acetylmethionine modification is found at Met-1. Over residues 1–10 (MDFPTISRSP) the composition is skewed to polar residues. Disordered regions lie at residues 1–50 (MDFP…LSRM) and 118–211 (CEEC…GPCD). Ser-11 bears the Phosphoserine mark. The span at 143–153 (EDPDEDSDSPE) shows a compositional bias: acidic residues. Low complexity predominate over residues 156-184 (EGASAEQEGSRSSSSSPEPWLETVPLVTP). Position 171 is a phosphoserine (Ser-171). Positions 215–364 (LLDGVIFGAR…QFLRESGIDP (150 aa)) are required for interaction with NECAB3. One can recognise a PID domain in the interval 217–381 (DGVIFGARYL…SPGACHLHNG (165 aa)). Ser-372 carries the post-translational modification Phosphoserine. PDZ domains are found at residues 394–480 (EVHL…IVHC) and 485–560 (TAII…TMPA).

In terms of assembly, binds to the cytoplasmic domain of amyloid protein (APP) in vivo. Interacts with HIF1AN (via N-terminus). Interacts with NECAB3; seems to mediate the interaction between NECAB3 and HIF1AN. As to expression, expressed in all tissues examined with lower levels in brain and testis.

Its subcellular location is the cytoplasm. It localises to the perinuclear region. In terms of biological role, may modulate processing of the amyloid-beta precursor protein (APP) and hence formation of APP-beta. May enhance the activity of HIF1A in macrophages by inhibiting the activity of HIF1AN. This is Amyloid-beta A4 precursor protein-binding family A member 3 (APBA3) from Homo sapiens (Human).